Consider the following 659-residue polypeptide: Mannosyl-oligosaccharide 1,2-alpha-mannosidase IA (659 aa).

Residues 1–48 (MPVGGLLPLFSSPAGGGLGGGLGGGLGGGGGGGGRKGSGPSAFRLTEK) are Cytoplasmic-facing. Residues 49–69 (FVLLLVFSAFITLCFGAIFFL) traverse the membrane as a helical; Signal-anchor for type II membrane protein segment. At 70–659 (PDSSKLLSGV…NIKKVEDNEK (590 aa)) the chain is on the lumenal side. The tract at residues 88-121 (QPAADHKPGPGARAEDAADGRARPGEEGAPGDPA) is disordered. Residues 91–113 (ADHKPGPGARAEDAADGRARPGE) are compositionally biased toward basic and acidic residues. Residues Cys-482 and Cys-514 are joined by a disulfide bond. Glu-528 functions as the Proton donor in the catalytic mechanism. A Ca(2+)-binding site is contributed by Thr-639.

It belongs to the glycosyl hydrolase 47 family. It depends on Ca(2+) as a cofactor.

The protein resides in the endoplasmic reticulum membrane. It catalyses the reaction N(4)-(alpha-D-Man-(1-&gt;2)-alpha-D-Man-(1-&gt;2)-alpha-D-Man-(1-&gt;3)-[alpha-D-Man-(1-&gt;2)-alpha-D-Man-(1-&gt;3)-[alpha-D-Man-(1-&gt;2)-alpha-D-Man-(1-&gt;6)]-alpha-D-Man-(1-&gt;6)]-beta-D-Man-(1-&gt;4)-beta-D-GlcNAc-(1-&gt;4)-beta-D-GlcNAc)-L-asparaginyl-[protein] (N-glucan mannose isomer 9A1,2,3B1,2,3) + 4 H2O = N(4)-(alpha-D-Man-(1-&gt;3)-[alpha-D-Man-(1-&gt;3)-[alpha-D-Man-(1-&gt;6)]-alpha-D-Man-(1-&gt;6)]-beta-D-Man-(1-&gt;4)-beta-D-GlcNAc-(1-&gt;4)-beta-D-GlcNAc)-L-asparaginyl-[protein] (N-glucan mannose isomer 5A1,2) + 4 beta-D-mannose. It carries out the reaction N(4)-(alpha-D-Man-(1-&gt;2)-alpha-D-Man-(1-&gt;2)-alpha-D-Man-(1-&gt;3)-[alpha-D-Man-(1-&gt;3)-[alpha-D-Man-(1-&gt;2)-alpha-D-Man-(1-&gt;6)]-alpha-D-Man-(1-&gt;6)]-beta-D-Man-(1-&gt;4)-beta-D-GlcNAc-(1-&gt;4)-beta-D-GlcNAc)-L-asparaginyl-[protein] (N-glucan mannose isomer 8A1,2,3B1,3) + 3 H2O = N(4)-(alpha-D-Man-(1-&gt;3)-[alpha-D-Man-(1-&gt;3)-[alpha-D-Man-(1-&gt;6)]-alpha-D-Man-(1-&gt;6)]-beta-D-Man-(1-&gt;4)-beta-D-GlcNAc-(1-&gt;4)-beta-D-GlcNAc)-L-asparaginyl-[protein] (N-glucan mannose isomer 5A1,2) + 3 beta-D-mannose. It functions in the pathway protein modification; protein glycosylation. Its activity is regulated as follows. Inhibited by both 1-deoxymannojirimycin and kifunensine. Its function is as follows. Involved in the maturation of Asn-linked oligosaccharides. Progressively trim alpha-1,2-linked mannose residues from Man(9)GlcNAc(2) to produce Man(5)GlcNAc(2). In Sus scrofa (Pig), this protein is Mannosyl-oligosaccharide 1,2-alpha-mannosidase IA (MAN1A1).